The sequence spans 1037 residues: Nucleoporin NUP120 (1037 aa).

2 leucine-zipper regions span residues L131 to L152 and L290 to L311. Phosphothreonine is present on T417.

Component of the nuclear pore complex (NPC). NPC constitutes the exclusive means of nucleocytoplasmic transport. NPCs allow the passive diffusion of ions and small molecules and the active, nuclear transport receptor-mediated bidirectional transport of macromolecules such as proteins, RNAs, ribonucleoparticles (RNPs), and ribosomal subunits across the nuclear envelope. Due to its 8-fold rotational symmetry, all subunits are present with 8 copies or multiples thereof. NUP120 is part of the heptameric 0.5 MDa autoassembling NUP84 NPC subcomplex (NUP84, NUP85, NUP120, NUP133, NUP145C, SEC13 and SEH1).

Its subcellular location is the nucleus. It is found in the nuclear pore complex. The protein resides in the nucleus membrane. Its function is as follows. Functions as a component of the nuclear pore complex (NPC). NPC components, collectively referred to as nucleoporins (NUPs), can play the role of both NPC structural components and of docking or interaction partners for transiently associated nuclear transport factors. NUP120 is involved in nuclear poly(A)+ RNA and pre-ribosome export, in GSP1 nuclear import, in NPC assembly and distribution, as well as in nuclear envelope organization. In Saccharomyces cerevisiae (strain ATCC 204508 / S288c) (Baker's yeast), this protein is Nucleoporin NUP120 (NUP120).